The chain runs to 1435 residues: DNA polymerase III PolC-type (1435 aa).

The 159-residue stretch at 404-562 (YVVYDIETTG…YDSSVLTNIF (159 aa)) folds into the Exonuclease domain.

It belongs to the DNA polymerase type-C family. PolC subfamily.

It is found in the cytoplasm. It carries out the reaction DNA(n) + a 2'-deoxyribonucleoside 5'-triphosphate = DNA(n+1) + diphosphate. Required for replicative DNA synthesis. This DNA polymerase also exhibits 3' to 5' exonuclease activity. The chain is DNA polymerase III PolC-type from Mycoplasmopsis pulmonis (strain UAB CTIP) (Mycoplasma pulmonis).